A 505-amino-acid chain; its full sequence is Glucan endo-1,3-beta-glucosidase 2 (505 aa).

The N-terminal stretch at 1-20 (MASLLHLLLLSLSLLVLASA) is a signal peptide. An N-linked (GlcNAc...) asparagine glycan is attached at Asn97. Glu125 (proton donor) is an active-site residue. Residues Asn180 and Asn262 are each glycosylated (N-linked (GlcNAc...) asparagine). Glu272 serves as the catalytic Nucleophile. 3 N-linked (GlcNAc...) asparagine glycosylation sites follow: Asn304, Asn361, and Asn365. The cysteines at positions 369 and 432 are disulfide-linked. N-linked (GlcNAc...) asparagine glycans are attached at residues Asn461, Asn466, and Asn473. The GPI-anchor amidated serine moiety is linked to residue Ser477. A propeptide spans 478 to 505 (SGIRSDLYYSRGIWSILTVMILNVANIL) (removed in mature form).

This sequence belongs to the glycosyl hydrolase 17 family. In terms of processing, contains two additional disulfide bonds.

Its subcellular location is the cell membrane. The enzyme catalyses Hydrolysis of (1-&gt;3)-beta-D-glucosidic linkages in (1-&gt;3)-beta-D-glucans.. This is Glucan endo-1,3-beta-glucosidase 2 from Arabidopsis thaliana (Mouse-ear cress).